The following is a 317-amino-acid chain: Transcriptional activator protein med (317 aa).

Residues 1–17 (MITRLVMIFSVLLLLSG) form the signal peptide. A lipid anchor (N-palmitoyl cysteine) is attached at C18. C18 is lipidated: S-diacylglycerol cysteine.

Belongs to the BMP lipoprotein family.

The protein localises to the cell membrane. Its function is as follows. Positive activator of the comK gene. This Bacillus subtilis (strain 168) protein is Transcriptional activator protein med (med).